A 229-amino-acid polypeptide reads, in one-letter code: Glycine betaine/carnitine/choline transport system permease protein OpuCD (229 aa).

One can recognise an ABC transmembrane type-1 domain in the interval 22–202; the sequence is FYRHFLMSVY…LMAVIADLVM (181 aa). Transmembrane regions (helical) follow at residues 27–47, 55–74, 78–100, 148–168, and 182–202; these read LMSVYGVLFAAIVGIPLGILI, GWVFAVTNVIQTIPALAMLA, LVMGLGANTVILSLFLYSLLPII, ALVIAIGITAIGTFVGAGGLG, and AIILAGAIPTALMAVIADLVM.

It belongs to the binding-protein-dependent transport system permease family. CysTW subfamily. As to quaternary structure, the complex is composed of two ATP-binding proteins (OpuCA), two transmembrane proteins (OpuCB and OpuCD) and a solute-binding protein (OpuCC).

Its subcellular location is the cell membrane. Its function is as follows. Involved in a high affinity multicomponent binding-protein-dependent transport system for glycine betaine, carnitine and choline; probably responsible for the translocation of the substrate across the membrane. This Bacillus subtilis (strain 168) protein is Glycine betaine/carnitine/choline transport system permease protein OpuCD (opuCD).